The following is a 202-amino-acid chain: Snake venom metalloproteinase leucurolysin-A (202 aa).

Gln1 carries the post-translational modification Pyrrolidone carboxylic acid. The 197-residue stretch at 6 to 202 folds into the Peptidase M12B domain; it reads RYIELVVVAD…HNPQCILNKP (197 aa). Ca(2+) is bound by residues Glu9 and Asp93. Disulfide bonds link Cys117–Cys197, Cys157–Cys181, and Cys159–Cys164. His142 provides a ligand contact to Zn(2+). Glu143 is an active-site residue. The Zn(2+) site is built by His146 and His152. Positions 197 and 200 each coordinate Ca(2+).

The protein belongs to the venom metalloproteinase (M12B) family. P-I subfamily. In terms of assembly, monomer. Zn(2+) is required as a cofactor. Expressed by the venom gland.

The protein resides in the secreted. With respect to regulation, inhibited by EDTA and 2-mercaptoethanol. Inhibited by 1 mM zinc ion and to a lesser extent by 1 mM calcium ion. In terms of biological role, non-hemorrhagic metalloproteinase that hydrolyzes the alpha chains of fibrinogen, as well as fibrin, fibronectin and casein. Beta and gamma chains are also hydrolyzed, but more slowly. Thrombolytic activity is also observed. Induces detachment of endothelial cells followed by death, and inhibits endothelial cell adhesion to fibronectin. Induces edema in mouse paw. Inhibits ADP-induced platelet aggregation on human platelet-rich plasma with an IC(50) of 2.8 uM. The protein is Snake venom metalloproteinase leucurolysin-A of Bothrops leucurus (Whitetail lancehead).